The chain runs to 816 residues: Stemod-13(17)-ene synthase (816 aa).

Residues 1-10 (MMLLSSSYSG) are compositionally biased toward polar residues. Positions 1 to 24 (MMLLSSSYSGGQFPGVSPLGTRPK) are disordered. D553, D557, N698, T702, and E706 together coordinate Mg(2+). The short motif at 553–557 (DDFFD) is the DDXXD motif element.

It belongs to the terpene synthase family. It depends on Mg(2+) as a cofactor.

It carries out the reaction 9alpha-copalyl diphosphate = stemod-13(17)-ene + diphosphate. Its function is as follows. Catalyzes the conversion of syn-copalyl diphosphate to stemodene. This is Stemod-13(17)-ene synthase (KSL11) from Oryza sativa subsp. indica (Rice).